The primary structure comprises 1203 residues: Metabotropic glutamate receptor 5 (1203 aa).

The N-terminal stretch at 1-20 (MVLLLILSVLLLKEDVRGSA) is a signal peptide. Topologically, residues 21-579 (QSSERRVVAH…QYLRWGDPEP (559 aa)) are extracellular. The cysteines at positions 57 and 99 are disulfide-linked. Y64 provides a ligand contact to L-glutamate. Residue N88 is glycosylated (N-linked (GlcNAc...) asparagine). L-glutamate is bound by residues S151 and 172 to 174 (SAT). N209 is a glycosylation site (N-linked (GlcNAc...) asparagine). Y222 contributes to the L-glutamate binding site. 8 disulfides stabilise this stretch: C240-C529, C275-C277, C364-C380, C418-C425, C510-C530, C514-C533, C536-C548, and C551-C564. Position 304 (D304) interacts with L-glutamate. 2 N-linked (GlcNAc...) asparagine glycosylation sites follow: N377 and N381. Residue K395 coordinates L-glutamate. The N-linked (GlcNAc...) asparagine glycan is linked to N444. The chain crosses the membrane as a helical span at residues 580 to 602 (IAAVVFACLGLLATLFVTVIFII). At 603-612 (YRDTPVVKSS) the chain is on the cytoplasmic side. The helical transmembrane segment at 613–635 (SRELCYIILAGICLGYLCTFCLI) threads the bilayer. At 636–643 (AKPKQIYC) the chain is on the extracellular side. A disulfide bridge connects residues C643 and C732. A helical membrane pass occupies residues 644–666 (YLQRIGIGLSPAMSYSALVTKTN). At 667–692 (RIARILAGSKKKICTKKPRFMSACAQ) the chain is on the cytoplasmic side. Residues 693 to 713 (LVIAFILICIQLGIIVALFIM) traverse the membrane as a helical segment. At 714–736 (EPPDIMHDYPSIREVYLICNTTN) the chain is on the extracellular side. The N-linked (GlcNAc...) asparagine glycan is linked to N733. The chain crosses the membrane as a helical span at residues 737 to 758 (LGVVTPLGYNGLLILSCTFYAF). At 759 to 771 (KTRNVPANFNEAK) the chain is on the cytoplasmic side. A helical membrane pass occupies residues 772–794 (YIAFTMYTTCIIWLAFVPIYFGS). At 795 to 797 (NYK) the chain is on the extracellular side. The helical transmembrane segment at 798–819 (IITMCFSVSLSATVALGCMFVP) threads the bilayer. The Cytoplasmic segment spans residues 820 to 1203 (KVYIILAKPE…RDYTQSSSSL (384 aa)). S860 carries the phosphoserine modification. R868 carries the post-translational modification Omega-N-methylarginine. Disordered regions lie at residues 892-970 (FTPK…GSGP), 1003-1054 (EESF…GSLM), and 1122-1182 (GAQG…ALCI). A compositionally biased stretch (polar residues) spans 905–920 (TMSSSNGKSVTWAQNE). R924 bears the Omega-N-methylarginine mark. The span at 1007-1017 (PAAARPRSPSP) shows a compositional bias: low complexity. Phosphoserine occurs at positions 1014 and 1016. Composition is skewed to polar residues over residues 1039–1054 (HSET…GSLM) and 1165–1176 (DSGSTTPNSPVS).

The protein belongs to the G-protein coupled receptor 3 family. As to quaternary structure, interacts with RYR1, RYR2, ITPR1, SHANK1 and SHANK3. The PPXXF motif binds HOMER1, HOMER2 and HOMER3. Interacts with SIAH1 and TAMALIN. Interacts with NCDN. Interacts with NECAB2. Interacts with CAMK2A. In terms of tissue distribution, widely distributed in neuronal cells of the central nervous system.

It localises to the cell membrane. In terms of biological role, G-protein coupled receptor for glutamate. Ligand binding causes a conformation change that triggers signaling via guanine nucleotide-binding proteins (G proteins) and modulates the activity of down-stream effectors. Signaling activates a phosphatidylinositol-calcium second messenger system and generates a calcium-activated chloride current. Plays an important role in the regulation of synaptic plasticity and the modulation of the neural network activity. The sequence is that of Metabotropic glutamate receptor 5 (Grm5) from Rattus norvegicus (Rat).